Here is a 664-residue protein sequence, read N- to C-terminus: E3 ubiquitin-protein ligase CHFR (664 aa).

One can recognise an FHA domain in the interval 38–89; the sequence is WTIGRRRGCDLSFPSNKLVSGDHCKLTVDEISGEVTLEDTSTNGTVINKLQV. 2 disordered regions span residues 170 to 220 and 245 to 264; these read LEEP…GRSS and ESKD…GDGE. The segment covering 174 to 202 has biased composition (polar residues); the sequence is QPSTSTSDLLPTASTSSTEPELTSAGQKH. A compositionally biased stretch (low complexity) spans 203–215; sequence SSSSGPGNTSISP. A compositionally biased stretch (basic and acidic residues) spans 245–263; that stretch reads ESKDHEELEPAKKKMKGDG. The RING-type zinc finger occupies 303–342; the sequence is CIICQDLLHDCVSLQPCMHTFCAACYSGWMERSSLCPTCR. The residue at position 385 (Thr385) is a Phosphothreonine. The disordered stretch occupies residues 389–413; sequence LQPKVRRSFSDEEGSSEDLLELSDV. Acidic residues predominate over residues 399–413; sequence DEEGSSEDLLELSDV. The PBZ-type zinc-finger motif lies at 633-655; that stretch reads PDCYWGRNCRTQVKAHHAMKFNH.

The protein belongs to the CHFR family. Interacts with HDAC1 and HDAC2. Interacts with PML (with sumoylated form of PML). Poly-ADP-ribosylated. In addition to binding non covalently poly(ADP-ribose) via its PBZ-type zinc finger, the protein is also covalently poly-ADP-ribosylated by PARP1. In terms of processing, autoubiquitinated; may regulate its cellular level. Post-translationally, phosphorylated by PKB. Phosphorylation may affect its E3 ligase activity.

It is found in the nucleus. The protein localises to the PML body. It carries out the reaction S-ubiquitinyl-[E2 ubiquitin-conjugating enzyme]-L-cysteine + [acceptor protein]-L-lysine = [E2 ubiquitin-conjugating enzyme]-L-cysteine + N(6)-ubiquitinyl-[acceptor protein]-L-lysine.. It functions in the pathway protein modification; protein ubiquitination. In terms of biological role, E3 ubiquitin-protein ligase that functions in the antephase checkpoint by actively delaying passage into mitosis in response to microtubule poisons. Acts in early prophase before chromosome condensation, when the centrosome move apart from each other along the periphery of the nucleus. Probably involved in signaling the presence of mitotic stress caused by microtubule poisons by mediating the 'Lys-48'-linked ubiquitination of target proteins, leading to their degradation by the proteasome. Promotes the ubiquitination and subsequent degradation of AURKA and PLK1. Probably acts as a tumor suppressor, possibly by mediating the polyubiquitination of HDAC1, leading to its degradation. May also promote the formation of 'Lys-63'-linked polyubiquitin chains and functions with the specific ubiquitin-conjugating UBC13-MMS2 (UBE2N-UBE2V2) heterodimer. Substrates that are polyubiquitinated at 'Lys-63' are usually not targeted for degradation, but are rather involved in signaling cellular stress. This is E3 ubiquitin-protein ligase CHFR (Chfr) from Mus musculus (Mouse).